The sequence spans 491 residues: MEKWWFNLILSNEELEHRCRLSKSMARPRPIGNTNGSQDPSINDRDKNGSDSGNYSFSNLDHLFDVKDNLSFIYDDTFLVRDSNGDSYSIYFDIENLIFEIDNDSFFLSKLESSFSNYLNSGSKNYNRYYDSYMYDTKYSWNNHINSYIDSYLCSEIRIDSYISSGIYNYSENYIYSYVWNGENVSTIKSRSSSIRTSANSSDINLKGRYNDFDINIKYRHLWVQCDNCYGLNYKKIFSSKMNICEQCGYHLKMSSSERIELSIDSGTWDPMNEDMVSTDPIEFHSEEEPYRDRIDSYQIKTGLTEAVQTGIGQLNGMPIAIGVMDFQFMGGSMGSVVGEKITRLIEYATNRSLPVIIVCASGGARMQEGSLSLMQMAKISSALYNYQLNKKLFYVSILTSPTTGGVTASFGMLGDIIIAEPNAYIAFAGKRVIEQTLNKTVPEGSQAAEYSFHKGLFDSIVPRNLLKGALSELLQLHGFFPLNHNSQVKR.

The disordered stretch occupies residues 26-49 (ARPRPIGNTNGSQDPSINDRDKNG). Residues 32-41 (GNTNGSQDPS) show a composition bias toward polar residues. Residues 222–491 (LWVQCDNCYG…PLNHNSQVKR (270 aa)) enclose the CoA carboxyltransferase N-terminal domain. The Zn(2+) site is built by cysteine 226, cysteine 229, cysteine 245, and cysteine 248. The segment at 226–248 (CDNCYGLNYKKIFSSKMNICEQC) adopts a C4-type zinc-finger fold.

It belongs to the AccD/PCCB family. Acetyl-CoA carboxylase is a heterohexamer composed of biotin carboxyl carrier protein, biotin carboxylase and 2 subunits each of ACCase subunit alpha and ACCase plastid-coded subunit beta (accD). Zn(2+) is required as a cofactor.

The protein localises to the plastid. The protein resides in the chloroplast stroma. The catalysed reaction is N(6)-carboxybiotinyl-L-lysyl-[protein] + acetyl-CoA = N(6)-biotinyl-L-lysyl-[protein] + malonyl-CoA. The protein operates within lipid metabolism; malonyl-CoA biosynthesis; malonyl-CoA from acetyl-CoA: step 1/1. Its function is as follows. Component of the acetyl coenzyme A carboxylase (ACC) complex. Biotin carboxylase (BC) catalyzes the carboxylation of biotin on its carrier protein (BCCP) and then the CO(2) group is transferred by the transcarboxylase to acetyl-CoA to form malonyl-CoA. This is Acetyl-coenzyme A carboxylase carboxyl transferase subunit beta, chloroplastic from Ceratophyllum demersum (Rigid hornwort).